We begin with the raw amino-acid sequence, 173 residues long: Photosystem I assembly protein Ycf3 (173 aa).

3 TPR repeats span residues 36 to 69 (AFAY…EQGE), 73 to 106 (SYIL…NPRL), and 121 to 154 (GELS…APNN).

Belongs to the Ycf3 family.

The protein localises to the cellular thylakoid membrane. In terms of biological role, essential for the assembly of the photosystem I (PSI) complex. May act as a chaperone-like factor to guide the assembly of the PSI subunits. This is Photosystem I assembly protein Ycf3 from Synechococcus sp. (strain JA-2-3B'a(2-13)) (Cyanobacteria bacterium Yellowstone B-Prime).